The primary structure comprises 513 residues: ATP synthase subunit alpha (513 aa).

An ATP-binding site is contributed by 169 to 176 (GDRQTGKS).

The protein belongs to the ATPase alpha/beta chains family. As to quaternary structure, F-type ATPases have 2 components, CF(1) - the catalytic core - and CF(0) - the membrane proton channel. CF(1) has five subunits: alpha(3), beta(3), gamma(1), delta(1), epsilon(1). CF(0) has three main subunits: a(1), b(2) and c(9-12). The alpha and beta chains form an alternating ring which encloses part of the gamma chain. CF(1) is attached to CF(0) by a central stalk formed by the gamma and epsilon chains, while a peripheral stalk is formed by the delta and b chains.

It is found in the cell inner membrane. The catalysed reaction is ATP + H2O + 4 H(+)(in) = ADP + phosphate + 5 H(+)(out). Produces ATP from ADP in the presence of a proton gradient across the membrane. The alpha chain is a regulatory subunit. The polypeptide is ATP synthase subunit alpha (Blochmanniella floridana).